Reading from the N-terminus, the 191-residue chain is UPF0312 protein PA0423 (191 aa).

The signal sequence occupies residues 1 to 23 (MLKKTLAALALGSALFTAGQAMA).

It belongs to the UPF0312 family. Type 1 subfamily.

The protein localises to the periplasm. This chain is UPF0312 protein PA0423, found in Pseudomonas aeruginosa (strain ATCC 15692 / DSM 22644 / CIP 104116 / JCM 14847 / LMG 12228 / 1C / PRS 101 / PAO1).